Consider the following 206-residue polypeptide: HTH-type transcriptional regulator BetI (206 aa).

In terms of domain architecture, HTH tetR-type spans 8-68 (PLRRKALVDA…ETIRSLLRDL (61 aa)). A DNA-binding region (H-T-H motif) is located at residues 31 to 50 (TMSDIAREAGVSAALAHHYF).

Its pathway is amine and polyamine biosynthesis; betaine biosynthesis via choline pathway [regulation]. Functionally, repressor involved in the biosynthesis of the osmoprotectant glycine betaine. It represses transcription of the choline transporter BetT and the genes of BetAB involved in the synthesis of glycine betaine. This Agrobacterium fabrum (strain C58 / ATCC 33970) (Agrobacterium tumefaciens (strain C58)) protein is HTH-type transcriptional regulator BetI.